We begin with the raw amino-acid sequence, 78 residues long: Large ribosomal subunit protein bL28B (78 aa).

The disordered stretch occupies residues Met1–Trp29. Positions His20 to Trp29 are enriched in basic residues.

This sequence belongs to the bacterial ribosomal protein bL28 family.

The polypeptide is Large ribosomal subunit protein bL28B (rpmB2) (Mycobacterium bovis (strain ATCC BAA-935 / AF2122/97)).